The following is a 545-amino-acid chain: Putative transcription factor ecdB (545 aa).

A DNA-binding region (zn(2)-C6 fungal-type) is located at residues C12–C39. Residues P79–D99 form a disordered region.

It localises to the nucleus. The protein is Putative transcription factor ecdB of Aspergillus rugulosus (Emericella rugulosa).